Consider the following 83-residue polypeptide: Large ribosomal subunit protein bL31B (83 aa).

It belongs to the bacterial ribosomal protein bL31 family. Type B subfamily. As to quaternary structure, part of the 50S ribosomal subunit.

The protein is Large ribosomal subunit protein bL31B of Bacteroides fragilis (strain ATCC 25285 / DSM 2151 / CCUG 4856 / JCM 11019 / LMG 10263 / NCTC 9343 / Onslow / VPI 2553 / EN-2).